Consider the following 88-residue polypeptide: MAEEMKEHIYIIPLRDARRMPRWKRANGAIKDIRKYLAKHMKTEDVKLDKTINEKVWSRGAEKPPSKIRVRAMKMEDGQVQAELALES.

The protein belongs to the eukaryotic ribosomal protein eL31 family.

The protein is Large ribosomal subunit protein eL31 of Methanoregula boonei (strain DSM 21154 / JCM 14090 / 6A8).